A 254-amino-acid chain; its full sequence is Probable phosphatase Sbal_1472 (254 aa).

9 residues coordinate Zn(2+): H8, H10, H16, H41, E74, H102, H132, D193, and H195.

Belongs to the PHP family. Zn(2+) is required as a cofactor.

In Shewanella baltica (strain OS155 / ATCC BAA-1091), this protein is Probable phosphatase Sbal_1472.